A 188-amino-acid polypeptide reads, in one-letter code: Peptidyl-tRNA hydrolase (188 aa).

Y15 is a binding site for tRNA. The active-site Proton acceptor is the H20. Positions 64, 66, and 112 each coordinate tRNA.

This sequence belongs to the PTH family. In terms of assembly, monomer.

Its subcellular location is the cytoplasm. It catalyses the reaction an N-acyl-L-alpha-aminoacyl-tRNA + H2O = an N-acyl-L-amino acid + a tRNA + H(+). Its function is as follows. Hydrolyzes ribosome-free peptidyl-tRNAs (with 1 or more amino acids incorporated), which drop off the ribosome during protein synthesis, or as a result of ribosome stalling. Catalyzes the release of premature peptidyl moieties from peptidyl-tRNA molecules trapped in stalled 50S ribosomal subunits, and thus maintains levels of free tRNAs and 50S ribosomes. This is Peptidyl-tRNA hydrolase from Cytophaga hutchinsonii (strain ATCC 33406 / DSM 1761 / CIP 103989 / NBRC 15051 / NCIMB 9469 / D465).